The primary structure comprises 63 residues: UPF0370 protein ECA1289 (63 aa).

The helical transmembrane segment at 3–23 (WLADYWWIILIILIGMLINGI) threads the bilayer. Positions 39–63 (PKLPPHRDNNDKWDNEEDDWPKKKP) are disordered.

Belongs to the UPF0370 family.

The protein resides in the cell membrane. This chain is UPF0370 protein ECA1289, found in Pectobacterium atrosepticum (strain SCRI 1043 / ATCC BAA-672) (Erwinia carotovora subsp. atroseptica).